The sequence spans 176 residues: MSNRIAVVPGTFDPVTRGHMDILTRTSRIFNTLYVLVANNPDKTPLLPMHDRVDLVGQALEEYGFPRSEPKCDSESDRNGPIVKIHRFEKGLLVDCCKQLGATVIVRGLISADAHREASMAYANRNMSGIETVFILPDPPLSVVSSSMVRQLIALGGDISPYVPACVTRFFGTHSG.

Thr11 provides a ligand contact to substrate. Residues 11 to 12 (TF) and His19 each bind ATP. Substrate contacts are provided by Lys43, Leu93, and Arg107. Residues Glu117 and 141-147 (LSVVSSS) each bind ATP.

The protein belongs to the bacterial CoaD family. In terms of assembly, homohexamer. Mg(2+) is required as a cofactor.

It localises to the cytoplasm. It catalyses the reaction (R)-4'-phosphopantetheine + ATP + H(+) = 3'-dephospho-CoA + diphosphate. It participates in cofactor biosynthesis; coenzyme A biosynthesis; CoA from (R)-pantothenate: step 4/5. In terms of biological role, reversibly transfers an adenylyl group from ATP to 4'-phosphopantetheine, yielding dephospho-CoA (dPCoA) and pyrophosphate. The polypeptide is Phosphopantetheine adenylyltransferase (Tropheryma whipplei (strain TW08/27) (Whipple's bacillus)).